Consider the following 193-residue polypeptide: Holliday junction branch migration complex subunit RuvA (193 aa).

The segment at 1 to 63 (MIGKLTGTVT…ENINKLYGFE (63 aa)) is domain I. The interval 64–148 (CRKSQEVARM…GIASSTNVHI (85 aa)) is domain II. A flexible linker region spans residues 149-150 (AS). The interval 150 to 193 (SEAVSALVKLGFQHKPSHKVVMEIMTKRPAIEIAELITLALKML) is domain III.

Belongs to the RuvA family. As to quaternary structure, homotetramer. Forms an RuvA(8)-RuvB(12)-Holliday junction (HJ) complex. HJ DNA is sandwiched between 2 RuvA tetramers; dsDNA enters through RuvA and exits via RuvB. An RuvB hexamer assembles on each DNA strand where it exits the tetramer. Each RuvB hexamer is contacted by two RuvA subunits (via domain III) on 2 adjacent RuvB subunits; this complex drives branch migration. In the full resolvosome a probable DNA-RuvA(4)-RuvB(12)-RuvC(2) complex forms which resolves the HJ.

It localises to the cytoplasm. Its function is as follows. The RuvA-RuvB-RuvC complex processes Holliday junction (HJ) DNA during genetic recombination and DNA repair, while the RuvA-RuvB complex plays an important role in the rescue of blocked DNA replication forks via replication fork reversal (RFR). RuvA specifically binds to HJ cruciform DNA, conferring on it an open structure. The RuvB hexamer acts as an ATP-dependent pump, pulling dsDNA into and through the RuvAB complex. HJ branch migration allows RuvC to scan DNA until it finds its consensus sequence, where it cleaves and resolves the cruciform DNA. This Neorickettsia sennetsu (strain ATCC VR-367 / Miyayama) (Ehrlichia sennetsu) protein is Holliday junction branch migration complex subunit RuvA.